We begin with the raw amino-acid sequence, 347 residues long: MDENKRKALGAALSQIEKQFGKGSVMRMGDVAAVRDIDVIPTGSLALDIALGCGGLPRGRIVEIYGPESSGKTTLTLEVIAQAQKTGGVAAFVDAEHALDPVYAEKIGVNLDDLLVSQPDTGEQALEIADVLVRSGGVDVVVIDSVAALTPKAELEGEMGDSHMGLQARLMSQALRKLTANIKRSNTLVIFINQIRMKIGVMFGNPETTTGGNALKFYASVRLDIRRSGAIKNGDEVIGNETRVKVVKNKVAPPFRTADFEILYGEGISREGELIDLGVNHDIVQKSGSWYSYGGDRIGQGKDNVRIYLKEHPEVAAAIEAAVREKALAGFQHAPSAERAALEESGF.

66 to 73 (GPESSGKT) provides a ligand contact to ATP.

The protein belongs to the RecA family.

It localises to the cytoplasm. Can catalyze the hydrolysis of ATP in the presence of single-stranded DNA, the ATP-dependent uptake of single-stranded DNA by duplex DNA, and the ATP-dependent hybridization of homologous single-stranded DNAs. It interacts with LexA causing its activation and leading to its autocatalytic cleavage. The protein is Protein RecA of Methylococcus capsulatus (strain ATCC 33009 / NCIMB 11132 / Bath).